The primary structure comprises 110 residues: UPF0060 membrane protein Mfla_2554 (110 aa).

4 consecutive transmembrane segments (helical) span residues 7 to 27, 33 to 53, 61 to 81, and 83 to 103; these read VALF…PYLW, SPLL…LLTL, VYAA…WVVD, and IIPS…MAII.

This sequence belongs to the UPF0060 family.

It localises to the cell inner membrane. This chain is UPF0060 membrane protein Mfla_2554, found in Methylobacillus flagellatus (strain ATCC 51484 / DSM 6875 / VKM B-1610 / KT).